A 99-amino-acid chain; its full sequence is Elongin-C (99 aa).

Ser2 is subject to N-acetylserine. Ser2 carries the phosphoserine modification.

This sequence belongs to the SKP1 family. In terms of assembly, heterodimer with ELA1. Component of a CRL3 E3 ubiquitin ligase complex consisting of the cullin CUL3, the linker protein ELC1, the substrate receptor ELA1, and the RING protein HRT1. Interacts with CIN5. Interacts with PCL6. Interacts with SNF4. Interacts with the large RNA polymerase II subunit RPO21 in a manner dependent on DEF1. Interacts with DEF1. Interacts with RAD7. Interacts with RAD16.

Its subcellular location is the cytoplasm. The protein localises to the nucleus. Its function is as follows. As part of the CRL3 E3 ubiquitin ligase complex; polyubiquitylates monoubiquitylated RNA polymerase II subunit RPO21 to trigger its proteolysis; plays a role in global genomic repair. Prevents degradation of interacting proteins like PCL6 by the proteasome. This chain is Elongin-C (ELC1), found in Saccharomyces cerevisiae (strain ATCC 204508 / S288c) (Baker's yeast).